We begin with the raw amino-acid sequence, 462 residues long: Phosphoglucosamine mutase (462 aa).

Catalysis depends on Ser-111, which acts as the Phosphoserine intermediate. Mg(2+) contacts are provided by Ser-111, Asp-250, Asp-252, and Asp-254. Residue Ser-111 is modified to Phosphoserine.

The protein belongs to the phosphohexose mutase family. Mg(2+) serves as cofactor. Activated by phosphorylation.

The catalysed reaction is alpha-D-glucosamine 1-phosphate = D-glucosamine 6-phosphate. In terms of biological role, catalyzes the conversion of glucosamine-6-phosphate to glucosamine-1-phosphate. This Synechococcus sp. (strain WH7803) protein is Phosphoglucosamine mutase.